Here is a 553-residue protein sequence, read N- to C-terminus: Hydroxylamine reductase (553 aa).

[2Fe-2S] cluster is bound by residues Cys-3, Cys-6, Cys-18, and Cys-25. 8 residues coordinate hybrid [4Fe-2O-2S] cluster: His-252, Glu-276, Cys-320, Cys-408, Cys-436, Cys-461, Glu-495, and Lys-497. Cys-408 carries the post-translational modification Cysteine persulfide.

Belongs to the HCP family. [2Fe-2S] cluster is required as a cofactor. Hybrid [4Fe-2O-2S] cluster serves as cofactor.

It is found in the cytoplasm. The catalysed reaction is A + NH4(+) + H2O = hydroxylamine + AH2 + H(+). Its function is as follows. Catalyzes the reduction of hydroxylamine to form NH(3) and H(2)O. This chain is Hydroxylamine reductase, found in Aliivibrio fischeri (strain MJ11) (Vibrio fischeri).